A 572-amino-acid chain; its full sequence is SHUGOSHIN 1 (572 aa).

A coiled-coil region spans residues 59–110 (KHQQQAILISSKENAENLQKENTKLMKVVMERDGIKSDLKKLRIEFQKVQEQ). 4 disordered regions span residues 185-221 (DADH…PANS), 244-285 (KLVS…QTET), 333-352 (ARLK…SIET), and 484-572 (SRRQ…RGGF). Residues 192-201 (SGSSNANSLQ) are compositionally biased toward polar residues. 4 stretches are compositionally biased toward basic and acidic residues: residues 244–257 (KLVS…ENHI), 336–352 (KSQE…SIET), 523–542 (ELKR…EMRK), and 552–572 (AAEK…RGGF).

It belongs to the shugoshin family.

In terms of biological role, protects sister chromatid centromere cohesion in meiosis I but not through the protection of the cohesin SYN1. Required with SGO2 for full protection of centromeric cohesion during anaphase I. Required to prevent precocious release of pericentromeric cohesins during meiosis. Not necessary for the maintenance of the synaptonemal complex (SC). Not required for monopolar spindle orientation in meiosis I. This Arabidopsis thaliana (Mouse-ear cress) protein is SHUGOSHIN 1.